The sequence spans 376 residues: Alanine racemase (376 aa).

K36 functions as the Proton acceptor; specific for D-alanine in the catalytic mechanism. At K36 the chain carries N6-(pyridoxal phosphate)lysine. R134 is a substrate binding site. Y266 serves as the catalytic Proton acceptor; specific for L-alanine. Substrate is bound at residue M314.

Belongs to the alanine racemase family. It depends on pyridoxal 5'-phosphate as a cofactor.

It catalyses the reaction L-alanine = D-alanine. Its pathway is amino-acid biosynthesis; D-alanine biosynthesis; D-alanine from L-alanine: step 1/1. Its function is as follows. Catalyzes the interconversion of L-alanine and D-alanine. May also act on other amino acids. The protein is Alanine racemase (alr) of Nitratidesulfovibrio vulgaris (strain DP4) (Desulfovibrio vulgaris).